We begin with the raw amino-acid sequence, 215 residues long: Cytochrome b6 (215 aa).

A helical membrane pass occupies residues 32–52; it reads IFYCLGGITFTCFLVQVATGF. Heme c is bound at residue C35. Heme b is bound by residues H86 and H100. A run of 3 helical transmembrane segments spans residues 90–110, 116–136, and 186–206; these read ASMM…TGGF, LTWT…VTGY, and LHTF…FLMI. Heme b contacts are provided by H187 and H202.

It belongs to the cytochrome b family. PetB subfamily. The 4 large subunits of the cytochrome b6-f complex are cytochrome b6, subunit IV (17 kDa polypeptide, PetD), cytochrome f and the Rieske protein, while the 4 small subunits are PetG, PetL, PetM and PetN. The complex functions as a dimer. The cofactor is heme b. Heme c serves as cofactor.

It localises to the plastid. Its subcellular location is the chloroplast thylakoid membrane. Functionally, component of the cytochrome b6-f complex, which mediates electron transfer between photosystem II (PSII) and photosystem I (PSI), cyclic electron flow around PSI, and state transitions. This Stigeoclonium helveticum (Green alga) protein is Cytochrome b6.